Here is a 152-residue protein sequence, read N- to C-terminus: Acidic phospholipase A2 1 (152 aa).

Positions 1–19 are cleaved as a signal peptide; that stretch reads MNPAYFLVLAAVCVSLLGA. Positions 20–27 are excised as a propeptide; that stretch reads ANIPPQPL. 7 disulfide bridges follow: Cys38/Cys104, Cys54/Cys151, Cys56/Cys72, Cys71/Cys132, Cys78/Cys125, Cys88/Cys118, and Cys111/Cys123. Residues Tyr55, Gly57, and Gly59 each coordinate Ca(2+). His75 is an active-site residue. Asp76 serves as a coordination point for Ca(2+). The active site involves Asp126.

It belongs to the phospholipase A2 family. Group I subfamily. D49 sub-subfamily. Ca(2+) serves as cofactor. As to expression, expressed by the venom gland.

The protein resides in the secreted. It carries out the reaction a 1,2-diacyl-sn-glycero-3-phosphocholine + H2O = a 1-acyl-sn-glycero-3-phosphocholine + a fatty acid + H(+). Functionally, PLA2 catalyzes the calcium-dependent hydrolysis of the 2-acyl groups in 3-sn-phosphoglycerides. The sequence is that of Acidic phospholipase A2 1 from Bungarus candidus (Malayan krait).